Reading from the N-terminus, the 414-residue chain is Enolase (414 aa).

Glutamine 162 is a binding site for (2R)-2-phosphoglycerate. The Proton donor role is filled by glutamate 204. Aspartate 239, glutamate 280, and aspartate 307 together coordinate Mg(2+). The (2R)-2-phosphoglycerate site is built by lysine 332, arginine 361, serine 362, and lysine 383. Lysine 332 acts as the Proton acceptor in catalysis.

The protein belongs to the enolase family. The cofactor is Mg(2+).

Its subcellular location is the cytoplasm. It localises to the secreted. It is found in the cell surface. It catalyses the reaction (2R)-2-phosphoglycerate = phosphoenolpyruvate + H2O. Its pathway is carbohydrate degradation; glycolysis; pyruvate from D-glyceraldehyde 3-phosphate: step 4/5. In terms of biological role, catalyzes the reversible conversion of 2-phosphoglycerate (2-PG) into phosphoenolpyruvate (PEP). It is essential for the degradation of carbohydrates via glycolysis. In Campylobacter jejuni subsp. jejuni serotype O:6 (strain 81116 / NCTC 11828), this protein is Enolase.